The sequence spans 513 residues: ATP synthase subunit alpha (513 aa).

An ATP-binding site is contributed by 169 to 176 (GDRQTGKT).

This sequence belongs to the ATPase alpha/beta chains family. In terms of assembly, F-type ATPases have 2 components, CF(1) - the catalytic core - and CF(0) - the membrane proton channel. CF(1) has five subunits: alpha(3), beta(3), gamma(1), delta(1), epsilon(1). CF(0) has three main subunits: a(1), b(2) and c(9-12). The alpha and beta chains form an alternating ring which encloses part of the gamma chain. CF(1) is attached to CF(0) by a central stalk formed by the gamma and epsilon chains, while a peripheral stalk is formed by the delta and b chains.

It localises to the cell inner membrane. It carries out the reaction ATP + H2O + 4 H(+)(in) = ADP + phosphate + 5 H(+)(out). Produces ATP from ADP in the presence of a proton gradient across the membrane. The alpha chain is a regulatory subunit. This Haemophilus ducreyi (strain 35000HP / ATCC 700724) protein is ATP synthase subunit alpha.